Reading from the N-terminus, the 256-residue chain is tRNA (guanine-N(7)-)-methyltransferase (256 aa).

Positions 85, 110, 137, and 159 each coordinate S-adenosyl-L-methionine. D159 is an active-site residue. Positions 163 and 195 each coordinate substrate.

It belongs to the class I-like SAM-binding methyltransferase superfamily. TrmB family.

The enzyme catalyses guanosine(46) in tRNA + S-adenosyl-L-methionine = N(7)-methylguanosine(46) in tRNA + S-adenosyl-L-homocysteine. The protein operates within tRNA modification; N(7)-methylguanine-tRNA biosynthesis. Functionally, catalyzes the formation of N(7)-methylguanine at position 46 (m7G46) in tRNA. The polypeptide is tRNA (guanine-N(7)-)-methyltransferase (Rhodopseudomonas palustris (strain HaA2)).